A 721-amino-acid polypeptide reads, in one-letter code: Oviduct-specific glycoprotein (721 aa).

Residues 1–21 (MGRLLLLAGLVLLMKHSDGTA) form the signal peptide. One can recognise a GH18 domain in the interval 22–385 (YKLVCYFTNW…HILNELLVQT (364 aa)). Cysteines 26 and 51 form a disulfide. Residues 71–72 (LQ), 98–101 (GGWN), Tyr142, 211–214 (LSYD), and Trp355 contribute to the chitin site. Residues Asn402 and Asn442 are each glycosylated (N-linked (GlcNAc...) asparagine). Positions 444–456 (TTVPSDGSVTPGG) are enriched in polar residues. Positions 444-465 (TTVPSDGSVTPGGTASPRKHAV) are disordered. A glycan (N-linked (GlcNAc...) asparagine) is linked at Asn469. Tandem repeats lie at residues 486–492 (SKTTTGV), 493–499 (SKTTTGI), 500–506 (SKTTTGV), 507–513 (SKTTTGV), 514–520 (SKATAGI), 521–527 (SKTIPEI), 528–534 (SKATAGV), 535–541 (SKTTTGV), 542–548 (SKTTTGI), 549–555 (SKTITGV), 556–562 (SKTTTGI), 563–569 (SKTTTGI), 570–576 (SKTTTGV), 577–583 (SKITTGV), 584–590 (SKTTTGI), 591–597 (SKTTTGI), 598–604 (SQTTTGI), 605–611 (SKTTTDI), 612–618 (SKTTTGI), 619–625 (SKTTPGI), and 626–632 (SKTTPGM). The tract at residues 486–632 (SKTTTGVSKT…PGISKTTPGM (147 aa)) is 21 X 7 AA tandem repeats of S-K-[TAI]-[TI]-[TAP]-[GED]-[IVM].

It belongs to the glycosyl hydrolase 18 family. In terms of tissue distribution, epithelial cells of the oviduct.

The protein localises to the cytoplasmic vesicle. The protein resides in the secretory vesicle. Functionally, binds to oocyte zona pellucida in vivo. May play a role in the fertilization process and/or early embryonic development. This Mus musculus (Mouse) protein is Oviduct-specific glycoprotein (Ovgp1).